We begin with the raw amino-acid sequence, 469 residues long: Peripherin (469 aa).

Composition is skewed to low complexity over residues 1-18 and 27-53; these read MSHPSGLRSSVSSTSYRR and SPGAFSYSSSSRFSSSRLLGSASPGSS. Residues 1–60 are disordered; sequence MSHPSGLRSSVSSTSYRRTFGPPPSLSPGAFSYSSSSRFSSSRLLGSASPGSSVRLGSFR. The interval 1-98 is head; that stretch reads MSHPSGLRSS…FLATRSNEKQ (98 aa). Tyrosine 16 carries the post-translational modification 3'-nitrotyrosine. Residues serine 27, serine 49, and serine 58 each carry the phosphoserine modification. An IF rod domain is found at 96-406; sequence EKQELQELND…KLLEGEESRI (311 aa). Positions 99 to 131 are coil 1A; it reads ELQELNDRFANFIEKVRFLEQQNAALRGELNQA. The tract at residues 132 to 142 is linker 1; sequence RGQEPARADQL. Positions 143 to 238 are coil 1B; the sequence is CQQELRELRR…KLHEEELRDL (96 aa). The linker 2 stretch occupies residues 239–261; sequence QLSVESQQVQHVEVEATVKPELT. The segment at 262–404 is coil 2; that stretch reads AALRDIRAQY…YRKLLEGEES (143 aa). Tyrosine 378 bears the 3'-nitrotyrosine mark. Residues 405–469 form a tail region; it reads RISVPVHSFA…SELDKSPQSY (65 aa). Residues 447–469 form a disordered region; sequence GEQVVTESQKEQHSELDKSPQSY. Residue tyrosine 469 is modified to Phosphotyrosine.

Belongs to the intermediate filament family. As to quaternary structure, forms homodimers (in vitro). Homopolymerizes into a filamentous network (in vitro). Forms heterodimers with NEFL, NEFM or NEFH (in vitro). Interacts with DST (via C-terminus). Interacts with RAB7A; the interaction is direct. Interacts with PRKCE (via phorbol-ester/DAG-type 2 domain). Phosphorylated; phosphorylation increases after nerve injury in regenerating neurons.

Its subcellular location is the cytoplasm. The protein resides in the cytoskeleton. It is found in the cell projection. It localises to the axon. The protein localises to the perikaryon. Functionally, class-III neuronal intermediate filament protein. May form an independent structural network without the involvement of other neurofilaments or may cooperate with the neuronal intermediate filament proteins NEFL, NEFH, NEFM and INA to form a filamentous network. Assembly of the neuronal intermediate filaments may be regulated by RAB7A. Plays a role in the development of unmyelinated sensory neurons. May be involved in axon elongation and axon regeneration after injury. Inhibits neurite extension in type II spiral ganglion neurons in the cochlea. This chain is Peripherin (PRPH), found in Bos taurus (Bovine).